The chain runs to 74 residues: Anaphase-promoting complex subunit 13 (74 aa).

The tract at residues 33–53 (LNELPEPEQDNGGTTESVKEQ) is disordered.

Belongs to the APC13 family. In terms of assembly, the mammalian APC/C is composed at least of 14 distinct subunits ANAPC1, ANAPC2, CDC27/APC3, ANAPC4, ANAPC5, CDC16/APC6, ANAPC7, CDC23/APC8, ANAPC10, ANAPC11, CDC26/APC12, ANAPC13, ANAPC15 and ANAPC16 that assemble into a complex of at least 19 chains with a combined molecular mass of around 1.2 MDa; APC/C interacts with FZR1 and FBXO5.

The protein localises to the nucleus. Its pathway is protein modification; protein ubiquitination. Component of the anaphase promoting complex/cyclosome (APC/C), a cell cycle-regulated E3 ubiquitin ligase that controls progression through mitosis and the G1 phase of the cell cycle. The APC/C complex acts by mediating ubiquitination and subsequent degradation of target proteins: it mainly mediates the formation of 'Lys-11'-linked polyubiquitin chains and, to a lower extent, the formation of 'Lys-48'- and 'Lys-63'-linked polyubiquitin chains. The APC/C complex catalyzes assembly of branched 'Lys-11'-/'Lys-48'-linked branched ubiquitin chains on target proteins. This chain is Anaphase-promoting complex subunit 13 (ANAPC13), found in Bos taurus (Bovine).